A 288-amino-acid chain; its full sequence is Bifunctional protein FolD (288 aa).

G166–S168 is an NADP(+) binding site.

This sequence belongs to the tetrahydrofolate dehydrogenase/cyclohydrolase family. As to quaternary structure, homodimer.

The enzyme catalyses (6R)-5,10-methylene-5,6,7,8-tetrahydrofolate + NADP(+) = (6R)-5,10-methenyltetrahydrofolate + NADPH. It carries out the reaction (6R)-5,10-methenyltetrahydrofolate + H2O = (6R)-10-formyltetrahydrofolate + H(+). It functions in the pathway one-carbon metabolism; tetrahydrofolate interconversion. Catalyzes the oxidation of 5,10-methylenetetrahydrofolate to 5,10-methenyltetrahydrofolate and then the hydrolysis of 5,10-methenyltetrahydrofolate to 10-formyltetrahydrofolate. In Levilactobacillus brevis (strain ATCC 367 / BCRC 12310 / CIP 105137 / JCM 1170 / LMG 11437 / NCIMB 947 / NCTC 947) (Lactobacillus brevis), this protein is Bifunctional protein FolD.